Here is a 163-residue protein sequence, read N- to C-terminus: TDIPQTMQDLDLQEVAGRWHSVAMVASDISLLDSESAPLRVYVEELRPTPEGNLEIILREGANHVCVERNIVAQKTEDPAVFTVNYQGERKISVLDTDYAHYMFFCVGPCLPSAEHGMVCQYLARTQKVDEEVMEKFSRALQPLPGHVQIIQDPSGGQERCGF.

Intrachain disulfides connect Cys66-Cys161 and Cys106-Cys120.

Belongs to the calycin superfamily. Lipocalin family. In terms of assembly, monomer.

The protein resides in the secreted. Lactoglobulin is the primary component of whey, it binds retinol and is probably involved in the transport of that molecule. The sequence is that of Beta-lactoglobulin-2 (LGB2) from Equus asinus (Donkey).